Consider the following 685-residue polypeptide: DNA topoisomerase 4 subunit B (685 aa).

Basic and acidic residues predominate over residues 389–400 (EAARKAREESRN). A disordered region spans residues 389-427 (EAARKAREESRNGKKRKKGESLLSGKLTPAQSRNPKKNE). The Toprim domain maps to 426–540 (NELYLVEGDS…AGKVYIALPP (115 aa)). Positions 432, 505, and 507 each coordinate Mg(2+). 2 stretches are compositionally biased toward acidic residues: residues 644 to 654 (GSILDRSEEDT) and 673 to 685 (QTDD…FDIE). A disordered region spans residues 644-685 (GSILDRSEEDTSAPTGESLLDAEKTKEAEQTDDTEISLFDIE).

It belongs to the type II topoisomerase family. ParE type 1 subfamily. Heterotetramer composed of ParC and ParE. Mg(2+) serves as cofactor. It depends on Mn(2+) as a cofactor. The cofactor is Ca(2+).

The catalysed reaction is ATP-dependent breakage, passage and rejoining of double-stranded DNA.. With respect to regulation, pyrrolopyrimidines inhibit both GyrB and its paralog in topoisomerase IV (parE). Functionally, topoisomerase IV is essential for chromosome segregation. It relaxes supercoiled DNA. Performs the decatenation events required during the replication of a circular DNA molecule. The polypeptide is DNA topoisomerase 4 subunit B (Enterococcus faecalis (strain ATCC 700802 / V583)).